The following is a 214-amino-acid chain: Thiamine pyrophosphokinase (214 aa).

The protein belongs to the thiamine pyrophosphokinase family.

The enzyme catalyses thiamine + ATP = thiamine diphosphate + AMP + H(+). The protein operates within cofactor biosynthesis; thiamine diphosphate biosynthesis; thiamine diphosphate from thiamine: step 1/1. Its function is as follows. Catalyzes the ATP-dependent phosphorylation of thiamine to thiamine pyrophosphate. Is involved in thiamine salvage. The polypeptide is Thiamine pyrophosphokinase (Bacillus subtilis (strain 168)).